A 261-amino-acid polypeptide reads, in one-letter code: uncharacterized protein (261 aa).

3 consecutive transmembrane segments (helical) span residues 15 to 35, 87 to 107, and 131 to 151; these read WYSVGLIFFSFIPIYYSIIVC, VYLIVLYIILIIHFGFEIRNA, and LLLYFQNLLLLPYICGGYFLI. The span at 234–246 shows a compositional bias: basic and acidic residues; the sequence is LEEKKAKRRQNAE. Residues 234–261 form a disordered region; it reads LEEKKAKRRQNAERRKKRREIAMEQREQ.

The protein resides in the membrane. This is an uncharacterized protein from Caenorhabditis elegans.